The primary structure comprises 253 residues: Hydroxypyruvate/pyruvate aldolase (253 aa).

The Proton acceptor role is filled by His48. A divalent metal cation contacts are provided by Glu151 and Asp177.

The protein belongs to the HpcH/HpaI aldolase family. The cofactor is a divalent metal cation.

It catalyses the reaction D-glyceraldehyde + pyruvate = 2-dehydro-3-deoxy-L-galactonate. Its function is as follows. Aldolase which can catalyze in vitro the aldolisation reaction between hydroxypyruvate (HPA) or pyruvate (PA) and D-glyceraldehyde (D-GA). The condensation of pyruvate and D-glyceraldehyde produces 2-dehydro-3-deoxy-L-galactonate. Has weak activity with hydroxypyruvate and D-glyceraldehyde. The protein is Hydroxypyruvate/pyruvate aldolase of Sagittula stellata (strain ATCC 700073 / DSM 11524 / E-37).